We begin with the raw amino-acid sequence, 345 residues long: Phosphate acyltransferase (345 aa).

The protein belongs to the PlsX family. In terms of assembly, homodimer. Probably interacts with PlsY.

It localises to the cytoplasm. The catalysed reaction is a fatty acyl-[ACP] + phosphate = an acyl phosphate + holo-[ACP]. The protein operates within lipid metabolism; phospholipid metabolism. Functionally, catalyzes the reversible formation of acyl-phosphate (acyl-PO(4)) from acyl-[acyl-carrier-protein] (acyl-ACP). This enzyme utilizes acyl-ACP as fatty acyl donor, but not acyl-CoA. The sequence is that of Phosphate acyltransferase from Chromobacterium violaceum (strain ATCC 12472 / DSM 30191 / JCM 1249 / CCUG 213 / NBRC 12614 / NCIMB 9131 / NCTC 9757 / MK).